The primary structure comprises 94 residues: Small ribosomal subunit protein uS17 (94 aa).

It belongs to the universal ribosomal protein uS17 family. Part of the 30S ribosomal subunit.

Its function is as follows. One of the primary rRNA binding proteins, it binds specifically to the 5'-end of 16S ribosomal RNA. This chain is Small ribosomal subunit protein uS17, found in Deinococcus geothermalis (strain DSM 11300 / CIP 105573 / AG-3a).